Here is a 391-residue protein sequence, read N- to C-terminus: MKFLDQAKIFVKSGDGGNGCVAFRREKNIEFGGPDGGHGGRGADVIVEAVPNLNTLIDFRYQQHFKAARGRDGSGDNRTGKSGEATIIKVPVGTQIFEDDRKTLIADLSRPGQRVRLAKGGDGGFGNAHYKSSTNQAPRRADPGWPGQEIWVWLRLKLIADAGLIGLPNAGKSTLLAAVTRARPKIADYPFTTLHPNLGVVHQDAREFIIADIPGLIEGAHEGAGLGTRFLGHVERCAVLLHMIDATQDDVAGAWRTVRAELKGHGQGLDEKSEIVGLSKIDALPPEDIAAKIAELSEACGAPVMAFSAISGKGLADVLRVMATHVDEARALRHARGEAEGDASDEAMRDVTGIDHGYNRPSAVVDWEDAPFDDDDDDDGDESGDKGQWTR.

The 159-residue stretch at 1–159 (MKFLDQAKIF…IWVWLRLKLI (159 aa)) folds into the Obg domain. The region spanning 160–327 (ADAGLIGLPN…VLRVMATHVD (168 aa)) is the OBG-type G domain. GTP-binding positions include 166 to 173 (GLPNAGKS), 191 to 195 (FTTLH), 212 to 215 (DIPG), 279 to 282 (SKID), and 308 to 310 (SAI). 2 residues coordinate Mg(2+): S173 and T193. The interval 352 to 391 (TGIDHGYNRPSAVVDWEDAPFDDDDDDDGDESGDKGQWTR) is disordered. Residues 366–382 (DWEDAPFDDDDDDDGDE) are compositionally biased toward acidic residues.

Belongs to the TRAFAC class OBG-HflX-like GTPase superfamily. OBG GTPase family. As to quaternary structure, monomer. Requires Mg(2+) as cofactor.

The protein localises to the cytoplasm. An essential GTPase which binds GTP, GDP and possibly (p)ppGpp with moderate affinity, with high nucleotide exchange rates and a fairly low GTP hydrolysis rate. Plays a role in control of the cell cycle, stress response, ribosome biogenesis and in those bacteria that undergo differentiation, in morphogenesis control. The protein is GTPase Obg of Rhodospirillum rubrum (strain ATCC 11170 / ATH 1.1.1 / DSM 467 / LMG 4362 / NCIMB 8255 / S1).